Consider the following 1081-residue polypeptide: WD repeat-containing protein 64 (1081 aa).

WD repeat units follow at residues 102–152 (DPIA…ATQK), 153–198 (GLIT…GSSQ), 199–265 (ENYF…VLDS), 266–314 (KNFK…LEDN), 315–356 (LPVR…NIST), 357–400 (KPVG…TLSL), 401–444 (LQVF…TRMI), 445–488 (QDTK…ETGL), 489–532 (QVYQ…FGSG), 533–631 (QEMK…LIVE), 632–740 (RNFS…PQSS), 741–803 (KGSK…EGRL), 804–857 (LKDM…EKKF), and 858–895 (KQLL…RLWH). Low complexity predominate over residues 726-745 (CSSSQCESSKGPQSSKGSKQ). Residues 726–757 (CSSSQCESSKGPQSSKGSKQSIHDSEVKGEQT) are disordered. Positions 746-756 (SIHDSEVKGEQ) are enriched in basic and acidic residues. The segment at 1036–1060 (DSSDGITGKKKGGHVQREKAPRRRS) is disordered. Basic residues predominate over residues 1043-1060 (GKKKGGHVQREKAPRRRS).

This is WD repeat-containing protein 64 (WDR64) from Homo sapiens (Human).